Reading from the N-terminus, the 417-residue chain is uncharacterized protein (417 aa).

It belongs to the MG032/MG096/MG288 family.

This is an uncharacterized protein from Mycoplasma pneumoniae (strain ATCC 29342 / M129 / Subtype 1) (Mycoplasmoides pneumoniae).